We begin with the raw amino-acid sequence, 192 residues long: MINISKKAQEHFTSLLSNEPENTQIRVFIVNPGTPNAECGVAFCPENEIELSDIQLKYDGFFVYVNKDTISYLKNSVIDLVTDKIGSQLTLKAPYAKNNFSKKVSSSLEEKVKCFLNLEINPQLSMHGGRVELMKIDENGIAAIQFSGGCNGCSMIGSTLKETVEKKLLSSFSEIKKVYDETHHLHGQHSFY.

[4Fe-4S] cluster is bound by residues cysteine 150 and cysteine 153.

Belongs to the NfuA family. As to quaternary structure, homodimer. Requires [4Fe-4S] cluster as cofactor.

In terms of biological role, involved in iron-sulfur cluster biogenesis. Binds a 4Fe-4S cluster, can transfer this cluster to apoproteins, and thereby intervenes in the maturation of Fe/S proteins. Could also act as a scaffold/chaperone for damaged Fe/S proteins. This is Fe/S biogenesis protein NfuA from Buchnera aphidicola subsp. Acyrthosiphon pisum (strain 5A).